Here is a 504-residue protein sequence, read N- to C-terminus: MAGEEGEDEAASIELQLEHHLQEQRASLTAVDEALAADPSNADLLEVHEELLAAIKDAEEGLLHLKRSRLVKQIDEIFPNQEPTSEAPEVAVDPPDDVEPEPLEPQEFSVGSKCRFRHKDGRWYNGCVIGLEGSSDARISFLTPTSENMSMCKFFLQQRCRFGSNCRLSHGIVIPILSLKQFTPTRWQQSLVGSSILAASGHHSGLWRRAELESWDDDLKVGQVVFQDDGSSARLPSDSLSISEYADESDEDGEGSSSDEGSDFSEDGDQEDESVHQGLGLLESKNLSGVQTETAIFAKWEHHTRGVASKMMAKMGYREGMGLGVSGQGMLDPIPVKVLPPKQSLDHAVAASEVNDSVGPGKKRSRGGKRKREKKFAEQARAAKAEEEERSVFSFINSQLVGQDVAEGSAVKSKKDSSGEANGHAKKEDRRSLLAYDDEVKELRSRVEKLEEMMKRNRKDKAFYEAASKKLKQTRKALADAEATHASATNAVARKEKEKKWLKF.

A coiled-coil region spans residues 40-69; sequence SNADLLEVHEELLAAIKDAEEGLLHLKRSR. Positions 77–105 are disordered; that stretch reads IFPNQEPTSEAPEVAVDPPDDVEPEPLEP. Residues 94-104 are compositionally biased toward acidic residues; sequence PPDDVEPEPLE. The C3H1-type zinc-finger motif lies at 146–173; sequence SENMSMCKFFLQQRCRFGSNCRLSHGIV. A disordered region spans residues 230–276; sequence GSSARLPSDSLSISEYADESDEDGEGSSSDEGSDFSEDGDQEDESVH. 2 stretches are compositionally biased toward acidic residues: residues 245-254 and 260-272; these read YADESDEDGE and EGSD…DQED. Residues 304-350 enclose the G-patch domain; that stretch reads TRGVASKMMAKMGYREGMGLGVSGQGMLDPIPVKVLPPKQSLDHAVA. Disordered stretches follow at residues 351 to 390, 406 to 432, and 482 to 504; these read ASEV…EEER, AEGS…DRRS, and EATH…WLKF. Residues 361 to 374 show a composition bias toward basic residues; that stretch reads GKKRSRGGKRKREK. 3 stretches are compositionally biased toward basic and acidic residues: residues 375-390, 413-432, and 493-504; these read KFAE…EEER, SKKD…DRRS, and ARKEKEKKWLKF. Positions 430–500 form a coiled coil; the sequence is RRSLLAYDDE…AVARKEKEKK (71 aa).

In Oryza sativa subsp. japonica (Rice), this protein is Zinc finger CCCH domain-containing protein 18.